A 214-amino-acid chain; its full sequence is MRIILLGAPGAGKGTQAQFIMGKYGIPQISTGDMLRAAVKAGTELGKQAKEIMDAGKLVTDELVIALVKERIAQDDCRNGFLLDGFPRTIPQADAMKDAGIDVDYVIEFAVPDELIIDRIIGRRVHAASGRVYHVKFNPPKVEDKDDVTGEDLSVRKDDQEDTVRKRLVEYHQQTAPLVSYYQKEADAGNTRYFKVEGTRKVEEVRAELETILG.

10 to 15 lines the ATP pocket; that stretch reads GAGKGT. The segment at 30 to 59 is NMP; it reads STGDMLRAAVKAGTELGKQAKEIMDAGKLV. AMP is bound by residues threonine 31, arginine 36, 57 to 59, 85 to 88, and glutamine 92; these read KLV and GFPR. An LID region spans residues 122–159; the sequence is GRRVHAASGRVYHVKFNPPKVEDKDDVTGEDLSVRKDD. ATP is bound by residues arginine 123 and 132–133; that span reads VY. Residues arginine 156 and arginine 167 each coordinate AMP. Arginine 200 lines the ATP pocket.

Belongs to the adenylate kinase family. Monomer.

It localises to the cytoplasm. The enzyme catalyses AMP + ATP = 2 ADP. The protein operates within purine metabolism; AMP biosynthesis via salvage pathway; AMP from ADP: step 1/1. In terms of biological role, catalyzes the reversible transfer of the terminal phosphate group between ATP and AMP. Plays an important role in cellular energy homeostasis and in adenine nucleotide metabolism. This is Adenylate kinase from Pectobacterium atrosepticum (strain SCRI 1043 / ATCC BAA-672) (Erwinia carotovora subsp. atroseptica).